Consider the following 240-residue polypeptide: Uridylate kinase (240 aa).

12-15 (KLSG) contacts ATP. The segment at 20–25 (GKQGFG) is involved in allosteric activation by GTP. Glycine 54 is a binding site for UMP. Glycine 55 and arginine 59 together coordinate ATP. Residues aspartate 74 and 135 to 142 (TGNPYFST) contribute to the UMP site. ATP is bound by residues asparagine 163, tyrosine 169, and aspartate 172.

The protein belongs to the UMP kinase family. In terms of assembly, homohexamer.

Its subcellular location is the cytoplasm. It carries out the reaction UMP + ATP = UDP + ADP. The protein operates within pyrimidine metabolism; CTP biosynthesis via de novo pathway; UDP from UMP (UMPK route): step 1/1. With respect to regulation, allosterically activated by GTP. Inhibited by UTP. Catalyzes the reversible phosphorylation of UMP to UDP. This Geobacillus kaustophilus (strain HTA426) protein is Uridylate kinase.